Here is a 67-residue protein sequence, read N- to C-terminus: DNA-directed RNA polymerase subunit omega (67 aa).

It belongs to the RNA polymerase subunit omega family. As to quaternary structure, the RNAP catalytic core consists of 2 alpha, 1 beta, 1 beta' and 1 omega subunit. When a sigma factor is associated with the core the holoenzyme is formed, which can initiate transcription.

It carries out the reaction RNA(n) + a ribonucleoside 5'-triphosphate = RNA(n+1) + diphosphate. Promotes RNA polymerase assembly. Latches the N- and C-terminal regions of the beta' subunit thereby facilitating its interaction with the beta and alpha subunits. This chain is DNA-directed RNA polymerase subunit omega, found in Methylibium petroleiphilum (strain ATCC BAA-1232 / LMG 22953 / PM1).